We begin with the raw amino-acid sequence, 548 residues long: Chaperonin GroEL (548 aa).

ATP is bound by residues 30–33 (TLGP), Lys-51, 87–91 (DGTTT), Gly-415, 478–480 (NAA), and Asp-494.

The protein belongs to the chaperonin (HSP60) family. In terms of assembly, forms a cylinder of 14 subunits composed of two heptameric rings stacked back-to-back. Interacts with the co-chaperonin GroES.

It localises to the cytoplasm. It catalyses the reaction ATP + H2O + a folded polypeptide = ADP + phosphate + an unfolded polypeptide.. Together with its co-chaperonin GroES, plays an essential role in assisting protein folding. The GroEL-GroES system forms a nano-cage that allows encapsulation of the non-native substrate proteins and provides a physical environment optimized to promote and accelerate protein folding. This chain is Chaperonin GroEL, found in Janthinobacterium sp. (strain Marseille) (Minibacterium massiliensis).